Here is a 505-residue protein sequence, read N- to C-terminus: Beta-glucosidase 18 (505 aa).

The N-terminal stretch at 1–26 (MAGGSKTRIHASLVSTLLLLLPLASA) is a signal peptide. Gln46 contributes to the a beta-D-glucoside binding site. An N-linked (GlcNAc...) asparagine glycan is attached at Asn55. Residues His148 and 193–194 (NE) each bind a beta-D-glucoside. Catalysis depends on Glu194, which acts as the Proton donor. Cys213 and Cys220 are joined by a disulfide. A beta-D-glucoside is bound at residue Tyr337. A disulfide bridge connects residues Cys345 and Cys350. A beta-D-glucoside is bound by residues Glu408, Trp457, 464 to 465 (EW), and Phe473. Glu408 functions as the Nucleophile in the catalytic mechanism.

This sequence belongs to the glycosyl hydrolase 1 family. As to expression, expressed in roots, leaves, flowers and pollen.

It catalyses the reaction Hydrolysis of terminal, non-reducing beta-D-glucosyl residues with release of beta-D-glucose.. In terms of biological role, hydrolyzes glycosides and monolignol glucosides. Can hydrolyze para-nitrophenyl beta-D-glucopyranoside (pNPGlc) in vitro. Hydrolyzes para-nitrophenyl beta-D-fucopyranoside, para-nitrophenyl beta-D-galactopyranoside and para-nitrophenyl beta-D-xylopyranoside in vitro. Hydrolyzes the monolignol glucosides coniferin and syringin with high catalytic efficiencies. This chain is Beta-glucosidase 18, found in Oryza sativa subsp. japonica (Rice).